Consider the following 576-residue polypeptide: Arginine--tRNA ligase (576 aa).

Residues 132–142 (ANPTGPMHIGH) carry the 'HIGH' region motif.

The protein belongs to the class-I aminoacyl-tRNA synthetase family. As to quaternary structure, monomer.

The protein resides in the cytoplasm. The enzyme catalyses tRNA(Arg) + L-arginine + ATP = L-arginyl-tRNA(Arg) + AMP + diphosphate. The sequence is that of Arginine--tRNA ligase from Ehrlichia ruminantium (strain Welgevonden).